Consider the following 291-residue polypeptide: Urease accessory protein UreD (291 aa).

Belongs to the UreD family. UreD, UreF and UreG form a complex that acts as a GTP-hydrolysis-dependent molecular chaperone, activating the urease apoprotein by helping to assemble the nickel containing metallocenter of UreC. The UreE protein probably delivers the nickel.

It is found in the cytoplasm. Functionally, required for maturation of urease via the functional incorporation of the urease nickel metallocenter. This Acinetobacter baumannii (strain ACICU) protein is Urease accessory protein UreD.